A 264-amino-acid chain; its full sequence is uncharacterized protein (264 aa).

A helical transmembrane segment spans residues 7–27; sequence LTLGICLVLLIILIVGYVIMT.

It belongs to the staphylococcal tandem lipoprotein family.

Its subcellular location is the cell membrane. This is an uncharacterized protein from Staphylococcus aureus (strain N315).